The following is a 397-amino-acid chain: Acetate kinase 2 (397 aa).

Residue Asn10 coordinates Mg(2+). Lys17 lines the ATP pocket. Position 90 (Arg90) interacts with substrate. Asp147 (proton donor/acceptor) is an active-site residue. Residues His207–Gly211, Asp281–Arg283, and Gly329–Asn333 each bind ATP. Glu385 serves as a coordination point for Mg(2+).

The protein belongs to the acetokinase family. In terms of assembly, homodimer. The cofactor is Mg(2+). Mn(2+) serves as cofactor.

It is found in the cytoplasm. The catalysed reaction is acetate + ATP = acetyl phosphate + ADP. Its pathway is metabolic intermediate biosynthesis; acetyl-CoA biosynthesis; acetyl-CoA from acetate: step 1/2. Its function is as follows. Catalyzes the formation of acetyl phosphate from acetate and ATP. Can also catalyze the reverse reaction. This Vibrio cholerae serotype O1 (strain ATCC 39315 / El Tor Inaba N16961) protein is Acetate kinase 2.